The primary structure comprises 106 residues: L-rhamnose mutarotase (106 aa).

A substrate-binding site is contributed by Tyr20. His24 acts as the Proton donor in catalysis. Substrate-binding positions include Tyr43 and 78 to 79 (WW).

This sequence belongs to the rhamnose mutarotase family. As to quaternary structure, homodimer.

The protein resides in the cytoplasm. The catalysed reaction is alpha-L-rhamnose = beta-L-rhamnose. The protein operates within carbohydrate metabolism; L-rhamnose metabolism. Involved in the anomeric conversion of L-rhamnose. The sequence is that of L-rhamnose mutarotase from Brucella anthropi (strain ATCC 49188 / DSM 6882 / CCUG 24695 / JCM 21032 / LMG 3331 / NBRC 15819 / NCTC 12168 / Alc 37) (Ochrobactrum anthropi).